A 119-amino-acid chain; its full sequence is Ribonuclease P protein component (119 aa).

This sequence belongs to the RnpA family. As to quaternary structure, consists of a catalytic RNA component (M1 or rnpB) and a protein subunit.

The enzyme catalyses Endonucleolytic cleavage of RNA, removing 5'-extranucleotides from tRNA precursor.. RNaseP catalyzes the removal of the 5'-leader sequence from pre-tRNA to produce the mature 5'-terminus. It can also cleave other RNA substrates such as 4.5S RNA. The protein component plays an auxiliary but essential role in vivo by binding to the 5'-leader sequence and broadening the substrate specificity of the ribozyme. This is Ribonuclease P protein component from Streptococcus pyogenes serotype M1.